A 376-amino-acid chain; its full sequence is MARGPGPLGRPRPDTVAMPKRGKRLKFRAHDACSGRVTVADYANSDPAVVRSGRVKKAVANAVQQEVKSLCGLEASQVPAEEALSGAGEPCDIIDSSDEMDAQEESIHERTVSRKKKSKRHKEELDGAGGEEYPMDIWLLLASYIRPEDIVNFSLICKNAWTVTCTAAFWTRLYRRHYTLDASLPLRLRPESMEKLRCLRACVIRSLYHMYEPFAARISKNPAIPESTPSTLKNSKCLLFWCRKIVGNRQEPMWEFNFKFKKQSPRLKSKCTGGLQPPVQYEDVHTNPDQDCCLLQVTTLNFIFIPIVMGMIFTLFTINVSTDMRHHRVRLVFQDSPVHGGRKLRSEQGVQVILDPVHSVRLFDWWHPQYPFSLRA.

Disordered regions lie at residues 1-20 (MARG…AMPK) and 100-127 (MDAQ…ELDG). A helical transmembrane segment spans residues 300-320 (LNFIFIPIVMGMIFTLFTINV).

This sequence belongs to the TMEM183 family.

It localises to the membrane. This chain is Transmembrane protein 183A (TMEM183A), found in Homo sapiens (Human).